Reading from the N-terminus, the 198-residue chain is Carnitine operon protein CaiE (198 aa).

The interval K174–Q198 is disordered. Residues E180–Q198 show a composition bias toward basic and acidic residues.

This sequence belongs to the transferase hexapeptide repeat family.

It participates in amine and polyamine metabolism; carnitine metabolism. Its function is as follows. Overproduction of CaiE stimulates the activity of CaiB and CaiD. This is Carnitine operon protein CaiE from Salmonella dublin (strain CT_02021853).